Consider the following 464-residue polypeptide: Nuclear distribution protein nudF 2 (464 aa).

The region spanning 9–41 (QAAELNKSIIAYLSAHGLAETLAAFRKESDFPD) is the LisH domain. A coiled-coil region spans residues 63–88 (NSTLMKKLLALESHNKALRNELNSTR). WD repeat units follow at residues 112–151 (SHRD…LERT), 154–195 (GHTM…KNVK), 199–238 (GHDH…RVKT), 241–280 (DHTG…PICK), 285–343 (GHEN…MTLT), 344–383 (GHAS…RCVK), 388–424 (AHDG…AELP), and 426–464 (SKLD…RSHK).

The protein belongs to the WD repeat LIS1/nudF family. Self-associates. Interacts with nudE and dynein.

It is found in the cytoplasm. It localises to the cytoskeleton. The protein localises to the spindle pole. Functionally, positively regulates the activity of the minus-end directed microtubule motor protein dynein. May enhance dynein-mediated microtubule sliding by targeting dynein to the microtubule plus end. Required for nuclear migration during vegetative growth as well as development. Required for retrograde early endosome (EE) transport from the hyphal tip. Required for localization of dynein to the mitotic spindle poles. Recruits additional proteins to the dynein complex at SPBs. In Penicillium rubens (strain ATCC 28089 / DSM 1075 / NRRL 1951 / Wisconsin 54-1255) (Penicillium chrysogenum), this protein is Nuclear distribution protein nudF 2.